A 208-amino-acid polypeptide reads, in one-letter code: Imidazoleglycerol-phosphate dehydratase (208 aa).

Residues 1–20 form a disordered region; the sequence is MSRRATVKAPRAGAAARRGA. Over residues 7-19 the composition is skewed to low complexity; it reads VKAPRAGAAARRG.

Belongs to the imidazoleglycerol-phosphate dehydratase family.

It is found in the cytoplasm. The enzyme catalyses D-erythro-1-(imidazol-4-yl)glycerol 3-phosphate = 3-(imidazol-4-yl)-2-oxopropyl phosphate + H2O. The protein operates within amino-acid biosynthesis; L-histidine biosynthesis; L-histidine from 5-phospho-alpha-D-ribose 1-diphosphate: step 6/9. The polypeptide is Imidazoleglycerol-phosphate dehydratase (Anaeromyxobacter sp. (strain K)).